The following is a 458-amino-acid chain: Dihydrolipoyllysine-residue acetyltransferase component of pyruvate dehydrogenase complex, mitochondrial (458 aa).

A mitochondrion-targeting transit peptide spans 1–28; sequence MIVPVLSRQALRHASVARVALPSLTRWY. Residues 34–110 form the Lipoyl-binding domain; that stretch reads HTVVKMPALS…AVGNPIAILV (77 aa). Lys75 is modified (N6-lipoyllysine). The disordered stretch occupies residues 126-164; the sequence is DAGGETSPAVPKDEPKNESTASAPTPAPTPAPEPENTSF. The Peripheral subunit-binding (PSBD) domain maps to 177 to 214; the sequence is NALPAAKRLAREKGIDLRNVKGSGPGGKITEEDVKKAL. Active-site residues include His431 and Asp435.

Belongs to the 2-oxoacid dehydrogenase family. (R)-lipoate is required as a cofactor.

Its subcellular location is the mitochondrion matrix. The catalysed reaction is N(6)-[(R)-dihydrolipoyl]-L-lysyl-[protein] + acetyl-CoA = N(6)-[(R)-S(8)-acetyldihydrolipoyl]-L-lysyl-[protein] + CoA. Functionally, the pyruvate dehydrogenase complex catalyzes the overall conversion of pyruvate to acetyl-CoA and CO(2). It contains multiple copies of three enzymatic components: pyruvate dehydrogenase (E1), dihydrolipoamide acetyltransferase (E2) and lipoamide dehydrogenase (E3). The polypeptide is Dihydrolipoyllysine-residue acetyltransferase component of pyruvate dehydrogenase complex, mitochondrial (mrp-3) (Neurospora crassa (strain ATCC 24698 / 74-OR23-1A / CBS 708.71 / DSM 1257 / FGSC 987)).